We begin with the raw amino-acid sequence, 318 residues long: Probable cell division protein WhiA (318 aa).

The segment at residues 281-314 (SLKELGQMLVPPVGKSGVNHRLRKIEEISKKLKE) is a DNA-binding region (H-T-H motif).

This sequence belongs to the WhiA family.

In terms of biological role, involved in cell division and chromosome segregation. The protein is Probable cell division protein WhiA of Thermoanaerobacter pseudethanolicus (strain ATCC 33223 / 39E) (Clostridium thermohydrosulfuricum).